The sequence spans 480 residues: Sestrin-2 (480 aa).

An N-acetylmethionine modification is found at Met1. Residues 20–45 (PGGVGDSGPGEEQRESRARRGPRGPS) are disordered. The tract at residues 66–239 (GLEALMSSGR…APTPPSEQSS (174 aa)) is N-terminal domain; mediates the alkylhydroperoxide reductase activity. Catalysis depends on Cys125, which acts as the Cysteine sulfenic acid (-SOH) intermediate. Lys175 participates in a covalent cross-link: Glycyl lysine isopeptide (Lys-Gly) (interchain with G-Cter in ubiquitin). 2 disordered regions span residues 222-252 (ADGS…SGGF) and 272-291 (LLRD…ELEK). Ser249 is modified (phosphoserine). The C-terminal domain; mediates TORC1 regulation stretch occupies residues 308–480 (PHPDMLCFVE…ALRAITRYMT (173 aa)). Residues 374-377 (TYNT), Thr386, and Glu451 each bind L-leucine.

Belongs to the sestrin family. As to quaternary structure, interacts with the GATOR2 complex which is composed of MIOS, SEC13, SEH1L, WDR24 and WDR59; the interaction is negatively regulated by leucine. Conveys leucine availability via direct interaction with SEH1L and WDR24 components of the GATOR2 complex. Interacts with RRAGA, RRAGB, RRAGC and RRAGD; may function as a guanine nucleotide dissociation inhibitor for RRAGs and regulate them. May interact with the TORC2 complex. Interacts with KEAP1, RBX1, SQSTM and ULK1; to regulate the degradation of KEAP1. May also associate with the complex composed of TSC1, TSC2 and the AMP-responsive protein kinase/AMPK to regulate TORC1 signaling. May interact with PRDX1. Post-translationally, phosphorylated by ULK1 at multiple sites. In terms of processing, ubiquitinated at Lys-175 by RNF167 via 'Lys-63'-linked polyubiquitination in response to leucine deprivation: ubiquitination promotes SESN2-interaction with the GATOR2 complex, leading to inhibit the TORC1 signaling pathway. Deubiquitinated at Lys-175 by STAMBPL1, promoting the TORC1 signaling pathway. Ubiquitinated by RNF186; ubiquitination mediates proteasomal degradation. In terms of tissue distribution, widely expressed.

The protein localises to the cytoplasm. The enzyme catalyses a hydroperoxide + L-cysteinyl-[protein] = S-hydroxy-L-cysteinyl-[protein] + an alcohol. Its function is as follows. Functions as an intracellular leucine sensor that negatively regulates the mTORC1 signaling pathway through the GATOR complex. In absence of leucine, binds the GATOR subcomplex GATOR2 and prevents mTORC1 signaling. Binding of leucine to SESN2 disrupts its interaction with GATOR2 thereby activating the TORC1 signaling pathway. This stress-inducible metabolic regulator also plays a role in protection against oxidative and genotoxic stresses. May negatively regulate protein translation in response to endoplasmic reticulum stress, via mTORC1. May positively regulate the transcription by NFE2L2 of genes involved in the response to oxidative stress by facilitating the SQSTM1-mediated autophagic degradation of KEAP1. May also mediate TP53 inhibition of TORC1 signaling upon genotoxic stress. Moreover, may prevent the accumulation of reactive oxygen species (ROS) through the alkylhydroperoxide reductase activity born by the N-terminal domain of the protein. Was originally reported to contribute to oxidative stress resistance by reducing PRDX1. However, this could not be confirmed. The polypeptide is Sestrin-2 (Homo sapiens (Human)).